A 338-amino-acid chain; its full sequence is Cytochrome bd ubiquinol oxidase subunit 2 (338 aa).

The next 9 membrane-spanning stretches (helical) occupy residues 7 to 27, 50 to 70, 75 to 95, 119 to 139, 163 to 183, 196 to 216, 227 to 247, 256 to 276, and 306 to 326; these read LWFILVAVLFVGFFFLEGFDF, IGPFWDANEVWLLTGAGAIFA, WYATMLSGYYIPFVIVLLALM, VVFFGSLIPPFVLGVLFTTLF, ILGGVTVTLLCFQHGLMFITL, MAQKIMGVVFVAVLAFAALSA, EITIPLAVLIVICFMLAAVFI, FGMTGAGLALTVGMIFISLFP, and IAALTLLPFVIGSQIWSYYVF.

Belongs to the cytochrome ubiquinol oxidase subunit 2 family. Heterodimer of subunits I and II. The cofactor is heme b. Requires heme d cis-diol as cofactor.

Its subcellular location is the cell membrane. The enzyme catalyses 2 a ubiquinol + O2(in) + 4 H(+)(in) = 2 a ubiquinone + 2 H2O(in) + 4 H(+)(out). This Bacillus subtilis (strain 168) protein is Cytochrome bd ubiquinol oxidase subunit 2 (cydB).